The sequence spans 384 residues: Cell division protein FtsZ (384 aa).

GTP contacts are provided by residues 20-24 (GGGGN), 107-109 (GTG), Glu-138, Arg-142, and Asn-186.

Belongs to the FtsZ family. Homodimer. Polymerizes to form a dynamic ring structure in a strictly GTP-dependent manner. Interacts directly with several other division proteins.

Its subcellular location is the cytoplasm. Its function is as follows. Essential cell division protein that forms a contractile ring structure (Z ring) at the future cell division site. The regulation of the ring assembly controls the timing and the location of cell division. One of the functions of the FtsZ ring is to recruit other cell division proteins to the septum to produce a new cell wall between the dividing cells. Binds GTP and shows GTPase activity. The protein is Cell division protein FtsZ of Wigglesworthia glossinidia brevipalpis.